The primary structure comprises 611 residues: Guanylate-binding protein 6 (611 aa).

The segment at 1-308 (MTQPQMAPIC…NAINSGAVPC (308 aa)) is GTPase domain (Globular). A GB1/RHD3-type G domain is found at 33-275 (SQPVVVVAIV…FVSYIFTYAK (243 aa)). Residues 43 to 50 (GLYRTGKS), 65 to 67 (LGS), and 95 to 99 (DTEGL) each bind GTP.

It belongs to the TRAFAC class dynamin-like GTPase superfamily. GB1/RHD3 GTPase family. GB1 subfamily.

The protein localises to the cytoplasmic vesicle. It carries out the reaction GTP + H2O = GDP + phosphate + H(+). Its function is as follows. Interferon (IFN)-inducible GTPase that plays important roles in innate immunity against a diverse range of bacterial, viral and protozoan pathogens, such as bacterial pathogens Listeria monocytogenes and Mycobacterium bovis BCG as well as the protozoan pathogen Toxoplasma gondii. Confers protection to several pathogens, including the bacterial pathogens Listeria monocytogenes and Mycobacterium bovis BCG as well as the protozoan pathogen Toxoplasma gondii. This chain is Guanylate-binding protein 6 (Gbp6), found in Mus musculus (Mouse).